A 131-amino-acid polypeptide reads, in one-letter code: Small ribosomal subunit protein uS8 (131 aa).

This sequence belongs to the universal ribosomal protein uS8 family. As to quaternary structure, part of the 30S ribosomal subunit. Contacts proteins S5 and S12.

Functionally, one of the primary rRNA binding proteins, it binds directly to 16S rRNA central domain where it helps coordinate assembly of the platform of the 30S subunit. This is Small ribosomal subunit protein uS8 from Chlorobium phaeobacteroides (strain DSM 266 / SMG 266 / 2430).